The sequence spans 384 residues: Ubiquitin-like modifier-activating enzyme 5 (384 aa).

ATP-binding residues include glycine 63, aspartate 84, lysine 107, asparagine 130, and asparagine 164. Zn(2+) contacts are provided by cysteine 206 and cysteine 209. The Glycyl thioester intermediate role is filled by cysteine 230. Cysteine 283 and cysteine 288 together coordinate Zn(2+). A disordered region spans residues 352–375 (EAPEKSSAEATQAATAPVDDTSLE).

Belongs to the ubiquitin-activating E1 family. UBA5 subfamily.

E1-like enzyme which activates UFM1. This Drosophila persimilis (Fruit fly) protein is Ubiquitin-like modifier-activating enzyme 5.